We begin with the raw amino-acid sequence, 430 residues long: MTEFSPREIVSELDRYIVGHAEAKKAVAVALRNRWRRRRVPADLRDEVTPKNILLIGPTGVGKTEIARRLAKLAQAPFLKVEATKFTEVGYVGRDVDQIVRDLVESALAMVREKRRAAVKAKAEGGAEERILDALTGPGSTAARESFRKKLRAGELDDKEVELQLADTGGPSFDIPGQPGAAVFNLSDMMKSLGGGRTKTHKTTVSGAWAPLIAEESDKLLDQEALTQEALELAENHGIVFLDEIDKVASSSQRSGADVSREGVQRDLLPLIEGTTVSTKYGPVKTDHILFIASGAFHVAKPSDLLPELQGRLPIRVELKGLSRDDMRRILTEPEANLIRQHQALMATEEVTLVFTDEAIDALADAAVAVNGSVENIGARRLQTVMEKVVEEISFTAADRGGETVTIDAAYVQERVGALAANADLSRFIL.

ATP contacts are provided by residues Val18, 60-65 (GVGKTE), Asp243, Glu308, and Arg380.

It belongs to the ClpX chaperone family. HslU subfamily. In terms of assembly, a double ring-shaped homohexamer of HslV is capped on each side by a ring-shaped HslU homohexamer. The assembly of the HslU/HslV complex is dependent on binding of ATP.

The protein resides in the cytoplasm. Its function is as follows. ATPase subunit of a proteasome-like degradation complex; this subunit has chaperone activity. The binding of ATP and its subsequent hydrolysis by HslU are essential for unfolding of protein substrates subsequently hydrolyzed by HslV. HslU recognizes the N-terminal part of its protein substrates and unfolds these before they are guided to HslV for hydrolysis. The chain is ATP-dependent protease ATPase subunit HslU from Caulobacter vibrioides (strain ATCC 19089 / CIP 103742 / CB 15) (Caulobacter crescentus).